Here is an 83-residue protein sequence, read N- to C-terminus: Small ribosomal subunit protein bS16 (83 aa).

It belongs to the bacterial ribosomal protein bS16 family.

The chain is Small ribosomal subunit protein bS16 from Albidiferax ferrireducens (strain ATCC BAA-621 / DSM 15236 / T118) (Rhodoferax ferrireducens).